The following is a 242-amino-acid chain: Outer membrane protein class 4 (242 aa).

The signal sequence occupies residues 1 to 22 (MTKQLKLSALFVALLASGTAVA). 7 consecutive repeat copies span residues 69-70 (AP), 71-72 (EP), 73-74 (EP), 75-76 (EP), 77-78 (EP), 79-80 (AP), and 81-82 (AP). Residues 69-82 (APEPEPEPEPAPAP) form a 7 X 2 AA tandem repeats of X-P region. In terms of domain architecture, OmpA-like spans 92-229 (YVDETISLSA…RVDVKIRSIV (138 aa)). A disulfide bond links cysteine 191 and cysteine 214.

This sequence belongs to the outer membrane OOP (TC 1.B.6) superfamily.

The protein resides in the cell outer membrane. The polypeptide is Outer membrane protein class 4 (rmpM) (Neisseria meningitidis serogroup A / serotype 4A (strain DSM 15465 / Z2491)).